The following is a 37-amino-acid chain: uncharacterized protein (37 aa).

This is an uncharacterized protein from Archaeoglobus fulgidus (strain ATCC 49558 / DSM 4304 / JCM 9628 / NBRC 100126 / VC-16).